A 158-amino-acid polypeptide reads, in one-letter code: GTP-dependent dephospho-CoA kinase (158 aa).

GTP-binding residues include D35, V36, D54, K56, E109, and D132.

It belongs to the GTP-dependent DPCK family.

It carries out the reaction 3'-dephospho-CoA + GTP = GDP + CoA + H(+). Its pathway is cofactor biosynthesis; coenzyme A biosynthesis. Catalyzes the GTP-dependent phosphorylation of the 3'-hydroxyl group of dephosphocoenzyme A to form coenzyme A (CoA). This Methanococcus maripaludis (strain C5 / ATCC BAA-1333) protein is GTP-dependent dephospho-CoA kinase.